The sequence spans 170 residues: Nicotinamide-nucleotide adenylyltransferase (170 aa).

Belongs to the archaeal NMN adenylyltransferase family.

It localises to the cytoplasm. It catalyses the reaction beta-nicotinamide D-ribonucleotide + ATP + H(+) = diphosphate + NAD(+). Its pathway is cofactor biosynthesis; NAD(+) biosynthesis; NAD(+) from nicotinamide D-ribonucleotide: step 1/1. The sequence is that of Nicotinamide-nucleotide adenylyltransferase from Methanothrix thermoacetophila (strain DSM 6194 / JCM 14653 / NBRC 101360 / PT) (Methanosaeta thermophila).